We begin with the raw amino-acid sequence, 824 residues long: Leucine--tRNA ligase (824 aa).

The 'HIGH' region signature appears at 42-52; the sequence is PYPSGRIHMGH. The short motif at 581 to 585 is the 'KMSKS' region element; sequence KMSKS. Residue K584 coordinates ATP.

It belongs to the class-I aminoacyl-tRNA synthetase family.

The protein resides in the cytoplasm. It carries out the reaction tRNA(Leu) + L-leucine + ATP = L-leucyl-tRNA(Leu) + AMP + diphosphate. The chain is Leucine--tRNA ligase from Geotalea uraniireducens (strain Rf4) (Geobacter uraniireducens).